Here is a 515-residue protein sequence, read N- to C-terminus: Histidine ammonia-lyase (515 aa).

A cross-link (5-imidazolinone (Ala-Gly)) is located at residues 142 to 144; it reads ASG. 2,3-didehydroalanine (Ser) is present on S143.

This sequence belongs to the PAL/histidase family. In terms of processing, contains an active site 4-methylidene-imidazol-5-one (MIO), which is formed autocatalytically by cyclization and dehydration of residues Ala-Ser-Gly.

The protein localises to the cytoplasm. The enzyme catalyses L-histidine = trans-urocanate + NH4(+). Its pathway is amino-acid degradation; L-histidine degradation into L-glutamate; N-formimidoyl-L-glutamate from L-histidine: step 1/3. The chain is Histidine ammonia-lyase from Bradyrhizobium sp. (strain ORS 278).